A 217-amino-acid chain; its full sequence is Glycosylphosphatidylinositol anchor biosynthesis protein 11 (217 aa).

A glycan (N-linked (GlcNAc...) asparagine) is linked at asparagine 20. Transmembrane regions (helical) follow at residues 41–61 (VYVR…LYWF), 66–86 (DFNL…YLIF), 107–127 (FITL…IVLF), 139–159 (WLLA…VFNC), 169–189 (YFIS…LDWD), and 197–217 (VPLI…GGYI).

It belongs to the PIGF family.

Its subcellular location is the endoplasmic reticulum membrane. The protein operates within glycolipid biosynthesis; glycosylphosphatidylinositol-anchor biosynthesis. Functionally, acts in the GPI biosynthetic pathway between GlcNAc-PI synthesis and GPI transfer to protein. The sequence is that of Glycosylphosphatidylinositol anchor biosynthesis protein 11 (GPI11) from Kluyveromyces lactis (strain ATCC 8585 / CBS 2359 / DSM 70799 / NBRC 1267 / NRRL Y-1140 / WM37) (Yeast).